A 215-amino-acid polypeptide reads, in one-letter code: 3-demethoxyubiquinol 3-hydroxylase (215 aa).

E64, E94, H97, E146, E178, and H181 together coordinate Fe cation.

This sequence belongs to the COQ7 family. It depends on Fe cation as a cofactor.

The protein resides in the cell membrane. It catalyses the reaction a 5-methoxy-2-methyl-3-(all-trans-polyprenyl)benzene-1,4-diol + AH2 + O2 = a 3-demethylubiquinol + A + H2O. The protein operates within cofactor biosynthesis; ubiquinone biosynthesis. Catalyzes the hydroxylation of 2-nonaprenyl-3-methyl-6-methoxy-1,4-benzoquinol during ubiquinone biosynthesis. The protein is 3-demethoxyubiquinol 3-hydroxylase of Stutzerimonas stutzeri (strain A1501) (Pseudomonas stutzeri).